A 423-amino-acid chain; its full sequence is Acyl-coenzyme A diphosphatase FITM2 (423 aa).

Positions methionine 1–alanine 47 are disordered. Residues methionine 1–lysine 75 lie on the Cytoplasmic side of the membrane. The helical transmembrane segment at valine 76–proline 96 threads the bilayer. Over lysine 97–lysine 113 the chain is Lumenal. Residues isoleucine 114–isoleucine 134 form a helical membrane-spanning segment. Topologically, residues threonine 135–histidine 146 are cytoplasmic. Residues phenylalanine 147 to valine 167 form a helical membrane-spanning segment. At glutamate 168–leucine 191 the chain is on the lumenal side. Residues tryptophan 192–isoleucine 212 form a helical membrane-spanning segment. The active site involves histidine 200. Residues glutamate 213–threonine 270 are Cytoplasmic-facing. Residues leucine 271–leucine 291 form a helical membrane-spanning segment. The Lumenal segment spans residues tyrosine 292 to lysine 299. Histidine 294 is a catalytic residue. A helical transmembrane segment spans residues valine 300–threonine 320. At proline 321 to serine 423 the chain is on the cytoplasmic side. Disordered stretches follow at residues phenylalanine 344–glutamine 381 and alanine 400–serine 423. Residues serine 351–asparagine 367 are compositionally biased toward low complexity. Over residues glutamine 409–serine 423 the composition is skewed to basic and acidic residues.

It belongs to the FIT family. FIT2 subfamily.

The protein resides in the endoplasmic reticulum membrane. The catalysed reaction is an acyl-CoA + H2O = an acyl-4'-phosphopantetheine + adenosine 3',5'-bisphosphate + 2 H(+). Its function is as follows. Fatty acyl-coenzyme A (CoA) diphosphatase that hydrolyzes fatty acyl-CoA to yield acyl-4'-phosphopantetheine and adenosine 3',5'-bisphosphate. Preferentially hydrolyzes unsaturated long-chain acyl-CoA substrates in the endoplasmic reticulum (ER) lumen. This catalytic activity is required for maintaining ER structure and for lipid droplets (LDs) biogenesis, which are lipid storage organelles involved in maintaining lipid and energy homeostasis. May directly bind to diacylglycerol (DAGs) and triacylglycerol, which is also important for LD biogenesis. May support directional budding of nacent LDs from the ER into the cytosol by reducing DAG levels at sites of LD formation. Plays a role in the regulation of cell morphology and cytoskeletal organization. Required for correct morphology of nociceptive multi-dendritic sensory neurons. Required for normal mechanical amplification in hearing. This chain is Acyl-coenzyme A diphosphatase FITM2, found in Drosophila melanogaster (Fruit fly).